A 72-amino-acid polypeptide reads, in one-letter code: MMSRLLVFLMLGAAFMLVVSANDAYGDEPAFKDLNQGDESLGKRKSCCPCWLRGNCFWGQNCYPEGCSGPKV.

The N-terminal stretch at 1-21 (MMSRLLVFLMLGAAFMLVVSA) is a signal peptide. Positions 22–42 (NDAYGDEPAFKDLNQGDESLG) are excised as a propeptide. 3 disulfide bridges follow: Cys-47–Cys-62, Cys-48–Cys-56, and Cys-50–Cys-67.

Belongs to the sea anemone short toxin (type III) family.

It localises to the secreted. The protein resides in the nematocyst. Functionally, voltage-gated sodium channel (Nav) inhibitor. 1 uM completely inhibits insect voltage-gated sodium channel inactivation (DmNav1 from D.melanogaster). This Anemonia viridis (Snakelocks anemone) protein is Delta-actitoxin-Avd2b 3.